Here is a 349-residue protein sequence, read N- to C-terminus: T-cell immunoglobulin and mucin domain-containing protein 2 (349 aa).

An N-terminal signal peptide occupies residues 1–20; that stretch reads MVQLQVFISGLLLLLPGAVA. Residues 21 to 275 are Extracellular-facing; sequence SYTVVQGHSV…QKLQRNPTKG (255 aa). The Ig-like V-type domain maps to 22-123; it reads YTVVQGHSVT…AFYFVDYLLE (102 aa). 3 cysteine pairs are disulfide-bonded: Cys34–Cys107, Cys48–Cys59, and Cys54–Cys106. N-linked (GlcNAc...) asparagine glycosylation is found at Asn84 and Asn89. Positions 128-271 are disordered; sequence LPTSPPTRPT…AIPPQKLQRN (144 aa). A compositionally biased stretch (low complexity) spans 136-215; the sequence is PTNTGRPTTT…TSTPPTPEQT (80 aa). Residues 222 to 260 are compositionally biased toward polar residues; it reads ATTYYPDQTTAEVTEAPSHTPTDWNNTATSSDDSWNSDT. The helical transmembrane segment at 276-296 threads the bilayer; it reads FYVGMSFAALLLLLLASTVAI. The Cytoplasmic segment spans residues 297 to 349; it reads TRYMVMRKNSGSLRFVAFPVSKIGASQNKVVEQARIEDEVYIIEDSPYFEEES.

The protein belongs to the immunoglobulin superfamily. TIM family. In terms of assembly, homodimer.

It localises to the cell membrane. In terms of biological role, probable receptor for SEMA4A involved in the regulation of T-cell function. The interaction with SEMA4A enhances T-cell activation. The sequence is that of T-cell immunoglobulin and mucin domain-containing protein 2 (Timd2) from Rattus norvegicus (Rat).